A 394-amino-acid polypeptide reads, in one-letter code: Fructose-bisphosphate aldolase, chloroplastic (394 aa).

The transit peptide at 1–46 (MASASLLKTSPVLDNPEFLKGQTLRIPSVAGVRFTPSGSSSLTVRA) directs the protein to the chloroplast. 2 residues coordinate substrate: Arg93 and Lys183. Residue Glu223 is the Proton acceptor of the active site. Catalysis depends on Lys265, which acts as the Schiff-base intermediate with dihydroxyacetone-P.

Belongs to the class I fructose-bisphosphate aldolase family.

It is found in the plastid. Its subcellular location is the chloroplast. It carries out the reaction beta-D-fructose 1,6-bisphosphate = D-glyceraldehyde 3-phosphate + dihydroxyacetone phosphate. It functions in the pathway carbohydrate degradation; glycolysis; D-glyceraldehyde 3-phosphate and glycerone phosphate from D-glucose: step 4/4. This chain is Fructose-bisphosphate aldolase, chloroplastic, found in Spinacia oleracea (Spinach).